The sequence spans 209 residues: Large ribosomal subunit protein uL3 (209 aa).

The tract at residues 127–151 (SGGPSSHGSKFHRHLGGTGQATTPA) is disordered.

Belongs to the universal ribosomal protein uL3 family. Part of the 50S ribosomal subunit. Forms a cluster with proteins L14 and L19.

Functionally, one of the primary rRNA binding proteins, it binds directly near the 3'-end of the 23S rRNA, where it nucleates assembly of the 50S subunit. The sequence is that of Large ribosomal subunit protein uL3 from Borrelia turicatae (strain 91E135).